The following is a 974-amino-acid chain: Hexokinase-1 (974 aa).

Residues 1-42 (MGWGAPLLSRMLHGPGQAGETSPVPERQSGSENPASEDRRPL) are disordered. The mitochondrial-binding peptide (MBP) stretch occupies residues 57 to 66 (CQRGQAVDVE). Hexokinase domains are found at residues 72–514 (PLTE…MVTA) and 520–962 (AEQH…LITA). Residues arginine 86 and 140–145 (DLGGSS) contribute to the ATP site. The hexokinase small subdomain 1 stretch occupies residues 129–263 (DGSEKGDFIA…DYDANIVAVV (135 aa)). Residue 140 to 147 (DLGGSSFR) coordinates D-glucose 6-phosphate. D-glucose is bound by residues serine 211, 228 to 229 (TK), and 264 to 265 (ND). Residues 264-503 (NDTVGTMMTC…SDVRFLLSES (240 aa)) form a hexokinase large subdomain 1 region. The D-glucose 6-phosphate site is built by aspartate 265 and threonine 288. Residues asparagine 291, glutamate 316, and 347–350 (QLFE) each bind D-glucose. Phosphoserine is present on serine 393. 469–471 (DGS) lines the D-glucose 6-phosphate pocket. 481-482 (RR) provides a ligand contact to ATP. D-glucose 6-phosphate-binding positions include serine 505 and 588–592 (DLGGT). The hexokinase small subdomain 2 stretch occupies residues 577 to 711 (DGTEHGDFLA…EFDLDVVAVV (135 aa)). 588 to 593 (DLGGTN) is an ATP binding site. Residues 659–660 (SF), 676–677 (TK), and 712–713 (ND) each bind D-glucose. The tract at residues 712-951 (NDTVGTMMTC…CTVSFLLSED (240 aa)) is hexokinase large subdomain 2. Aspartate 713 and threonine 736 together coordinate D-glucose 6-phosphate. Threonine 736 is an ATP binding site. D-glucose is bound by residues 738–739 (SN), glutamate 764, and glutamate 798. ATP contacts are provided by residues 803–804 (GM), 840–844 (TKFLS), and 919–923 (TLYKL). D-glucose 6-phosphate is bound by residues 917-919 (DGT) and serine 953.

It belongs to the hexokinase family. As to quaternary structure, monomer. Interacts with RABL2/RABL2A; binds preferentially to GTP-bound RABL2. Interacts with VDAC1. The HK1-VDAC1 complex interacts with ATF2. Interacts (via N-terminal spermatogenic cell-specific region) with PFKM isoform 2 and isoform 3 (via C-terminus). Interacts with SMAD5. Tyrosine-phosphorylated. As to expression, in rapidly growing tumor cells exhibiting high glucose catabolic rates, isoform HK1 is markedly elevated. Isoform HK1-SA, isoform HK1-SB and isoform HK1-SC are found only in spermatogenic cells. Isoform HK1-SC is detected in round spermatids, condensing spermatids and mature sperm where it is found in the head membranes, mitochondria of the midpiece and the fibrous sheath of the flagellum. Expressed within the principal piece and midpiece of sperm tail (at protein level).

It is found in the mitochondrion outer membrane. The protein localises to the cytoplasm. It localises to the cytosol. Its subcellular location is the membrane. It catalyses the reaction a D-hexose + ATP = a D-hexose 6-phosphate + ADP + H(+). It carries out the reaction D-fructose + ATP = D-fructose 6-phosphate + ADP + H(+). The catalysed reaction is D-glucose + ATP = D-glucose 6-phosphate + ADP + H(+). The enzyme catalyses D-mannose + ATP = D-mannose 6-phosphate + ADP + H(+). It catalyses the reaction D-glucosamine + ATP = D-glucosamine 6-phosphate + ADP + H(+). It participates in carbohydrate metabolism; hexose metabolism. It functions in the pathway carbohydrate degradation; glycolysis; D-glyceraldehyde 3-phosphate and glycerone phosphate from D-glucose: step 1/4. Hexokinase is an allosteric enzyme inhibited by its product D-glucose 6-phosphate. Hexokinase activity is inhibited by N-acetyl-D-glucosamine. In terms of biological role, catalyzes the phosphorylation of various hexoses, such as D-glucose, D-glucosamine, D-fructose, D-mannose and 2-deoxy-D-glucose, to hexose 6-phosphate (D-glucose 6-phosphate, D-glucosamine 6-phosphate, D-fructose 6-phosphate, D-mannose 6-phosphate and 2-deoxy-D-glucose 6-phosphate, respectively). Does not phosphorylate N-acetyl-D-glucosamine. Mediates the initial step of glycolysis by catalyzing phosphorylation of D-glucose to D-glucose 6-phosphate. Involved in innate immunity and inflammation by acting as a pattern recognition receptor for bacterial peptidoglycan. When released in the cytosol, N-acetyl-D-glucosamine component of bacterial peptidoglycan inhibits the hexokinase activity of HK1 and causes its dissociation from mitochondrial outer membrane, thereby activating the NLRP3 inflammasome. The chain is Hexokinase-1 from Mus musculus (Mouse).